The primary structure comprises 1070 residues: DNA-directed RNA polymerase subunit beta (1070 aa).

It belongs to the RNA polymerase beta chain family. In terms of assembly, in plastids the minimal PEP RNA polymerase catalytic core is composed of four subunits: alpha, beta, beta', and beta''. When a (nuclear-encoded) sigma factor is associated with the core the holoenzyme is formed, which can initiate transcription.

It localises to the plastid. The enzyme catalyses RNA(n) + a ribonucleoside 5'-triphosphate = RNA(n+1) + diphosphate. DNA-dependent RNA polymerase catalyzes the transcription of DNA into RNA using the four ribonucleoside triphosphates as substrates. The polypeptide is DNA-directed RNA polymerase subunit beta (Cuscuta exaltata (Tall dodder)).